Consider the following 755-residue polypeptide: 1,4-alpha-glucan branching enzyme GlgB (755 aa).

The Nucleophile role is filled by Asp435. The active-site Proton donor is Glu488.

This sequence belongs to the glycosyl hydrolase 13 family. GlgB subfamily. In terms of assembly, monomer.

It catalyses the reaction Transfers a segment of a (1-&gt;4)-alpha-D-glucan chain to a primary hydroxy group in a similar glucan chain.. It functions in the pathway glycan biosynthesis; glycogen biosynthesis. Catalyzes the formation of the alpha-1,6-glucosidic linkages in glycogen by scission of a 1,4-alpha-linked oligosaccharide from growing alpha-1,4-glucan chains and the subsequent attachment of the oligosaccharide to the alpha-1,6 position. The protein is 1,4-alpha-glucan branching enzyme GlgB of Vibrio parahaemolyticus serotype O3:K6 (strain RIMD 2210633).